A 159-amino-acid polypeptide reads, in one-letter code: Large ribosomal subunit protein uL13 (159 aa).

This sequence belongs to the universal ribosomal protein uL13 family. In terms of assembly, part of the 50S ribosomal subunit.

This protein is one of the early assembly proteins of the 50S ribosomal subunit, although it is not seen to bind rRNA by itself. It is important during the early stages of 50S assembly. The protein is Large ribosomal subunit protein uL13 of Methanopyrus kandleri (strain AV19 / DSM 6324 / JCM 9639 / NBRC 100938).